A 481-amino-acid chain; its full sequence is Dihydrolipoyl dehydrogenase (481 aa).

Residues 34 to 42 (EREHMGGIC) and Lys-51 contribute to the FAD site. The cysteines at positions 42 and 47 are disulfide-linked. NAD(+) contacts are provided by residues 195 to 199 (GSGAI), Glu-218, and 284 to 287 (AVGV). The FAD site is built by Asp-326 and Ala-334. His-460 (proton acceptor) is an active-site residue.

Belongs to the class-I pyridine nucleotide-disulfide oxidoreductase family. As to quaternary structure, homodimer. Requires FAD as cofactor.

The protein resides in the cytoplasm. It catalyses the reaction N(6)-[(R)-dihydrolipoyl]-L-lysyl-[protein] + NAD(+) = N(6)-[(R)-lipoyl]-L-lysyl-[protein] + NADH + H(+). In terms of biological role, lipoamide dehydrogenase is a component of the alpha-ketoacid dehydrogenase complexes. This Rhizobium etli (strain ATCC 51251 / DSM 11541 / JCM 21823 / NBRC 15573 / CFN 42) protein is Dihydrolipoyl dehydrogenase (lpdA).